Consider the following 256-residue polypeptide: 5-oxoprolinase subunit A 1 (256 aa).

The protein belongs to the LamB/PxpA family. Forms a complex composed of PxpA, PxpB and PxpC.

The enzyme catalyses 5-oxo-L-proline + ATP + 2 H2O = L-glutamate + ADP + phosphate + H(+). In terms of biological role, catalyzes the cleavage of 5-oxoproline to form L-glutamate coupled to the hydrolysis of ATP to ADP and inorganic phosphate. The sequence is that of 5-oxoprolinase subunit A 1 from Pseudomonas syringae pv. tomato (strain ATCC BAA-871 / DC3000).